A 994-amino-acid chain; its full sequence is Phosphoenolpyruvate carboxylase (994 aa).

A disordered region spans residues 1–66 (MKSSGSARAT…QGRTREDKDR (66 aa)). 2 stretches are compositionally biased toward low complexity: residues 14–25 (AVSSSSAPAHAE) and 41–54 (AAAR…AASA). Active-site residues include histidine 204 and lysine 646.

The protein belongs to the PEPCase type 1 family. Mg(2+) serves as cofactor.

The catalysed reaction is oxaloacetate + phosphate = phosphoenolpyruvate + hydrogencarbonate. Its function is as follows. Forms oxaloacetate, a four-carbon dicarboxylic acid source for the tricarboxylic acid cycle. The sequence is that of Phosphoenolpyruvate carboxylase from Burkholderia mallei (strain NCTC 10247).